Reading from the N-terminus, the 572-residue chain is MPVYCKYQFHKTPVHKTKGEPHGTHVYFQDINVIFLGALHPSDLREYLEGPPMVVEVHDRDRKSEECSQKPVLFGEDPLDSYLNFQALISPRETENNPFESQNKMWYPYGIAQVSFADLLLGHKYLNLAVPIHSCEVQPTHCGQDSRRRKVVGLGVPRDGHQHGPMPRGNYLEADSQLKLRVDIAVPLRAGARAADPDLGGSQFGRIIFVFDFKKVSLLHSLLQDITMINAKALGLDSYPVRTLQQILSAFKVRVRVQEQQHLDVLTGFHLLDGKTHLFILEGLADQGLRQLWENHQSWIPRSEHRKYKVLYNSQLLFRSRLYGDLEAILYHVHLFQPTELLLQQAVFFLRDTERRRVFQALARIHDICYNSTTLWDVTVRDLLPSSAMIKDLSQEFGMPLSQEELTDEKLFALPPQPAPNLEDYHSRNSTLTLEIHAHQEPRKRFTYSQDYLSAMVEPLDLKEEEKKAQKKSRQAWLTARGFQVTGLQSDTESSFQDLKLPPIKELNEEWKENSLFANVLEPVLDRDRWSWDRHHVDFDLYKKPPPFLELLPSPAPKPVTVRKKKGNSPIS.

A disordered region spans residues 553–572; sequence PSPAPKPVTVRKKKGNSPIS. Basic residues predominate over residues 561-572; the sequence is TVRKKKGNSPIS.

This is an uncharacterized protein from Homo sapiens (Human).